We begin with the raw amino-acid sequence, 1205 residues long: Nitric oxide synthase 3 (1205 aa).

A disordered region spans residues 1-73; the sequence is MGNLKSVGQE…PPEGPKFPRV (73 aa). A lipid anchor (N-myristoyl glycine) is attached at glycine 2. Residues cysteine 15 and cysteine 26 are each lipidated (S-palmitoyl cysteine). Positions 15–27 are enriched in gly residues; sequence CGLGLGLGLGLCG. The span at 33 to 47 shows a compositional bias: pro residues; that stretch reads SPAPEPSRAPAPATP. Positions 96 and 101 each coordinate Zn(2+). Positions 100–488 are interaction with NOSIP; the sequence is CCLGSLVLPR…PDPWKGSATK (389 aa). Serine 104 contacts (6R)-L-erythro-5,6,7,8-tetrahydrobiopterin. A Phosphoserine; by CDK5 modification is found at serine 116. Cysteine 186 contributes to the heme b binding site. Positions 249, 358, 359, 363, and 368 each coordinate L-arginine. Positions 448, 449, and 462 each coordinate (6R)-L-erythro-5,6,7,8-tetrahydrobiopterin. Heme b is bound at residue tyrosine 477. The tract at residues 492-512 is calmodulin-binding; the sequence is ITRKKTFKEVANAVKISASLM. Threonine 497 carries the phosphothreonine; by AMPK and PKA modification. Residues 522 to 705 form the Flavodoxin-like domain; that stretch reads ATILYASETG…AFRGWAKAAF (184 aa). FMN contacts are provided by serine 528, glutamate 529, threonine 530, arginine 532, serine 574, and threonine 575. 3 positions are modified to phosphoserine: serine 617, serine 635, and serine 640. FMN-binding residues include serine 656, cysteine 663, glutamate 689, and glutamine 693. Residues 758–1004 form the FAD-binding FR-type domain; it reads RKMFQATVLS…IRGAPSFRLP (247 aa). NADP(+) is bound at residue arginine 778. Histidine 800 contributes to the FAD binding site. A disordered region spans residues 820–847; it reads EDPPPPTESVAVEQLEKGSPGGPPPSWV. At serine 838 the chain carries Phosphoserine. FAD is bound by residues arginine 940, tyrosine 942, serine 943, threonine 958, alanine 960, tyrosine 964, valine 977, cysteine 978, and serine 979. The NADP(+) site is built by threonine 1018, arginine 1051, serine 1080, arginine 1081, lysine 1087, tyrosine 1089, and glutamine 1091. Threonine 1177 is subject to Phosphothreonine. Position 1179 is a phosphoserine; by AMPK, PDPK1 and PKA (serine 1179). At serine 1181 the chain carries Phosphoserine.

It belongs to the NOS family. In terms of assembly, homodimer. Interacts with NOSIP and NOSTRIN. Interacts with HSP90AB1. Forms a complex with ASL, ASS1 and SLC7A1; the complex regulates cell-autonomous L-arginine synthesis and citrulline recycling while channeling extracellular L-arginine to nitric oxide synthesis pathway. Heme b is required as a cofactor. It depends on FAD as a cofactor. The cofactor is FMN. (6R)-L-erythro-5,6,7,8-tetrahydrobiopterin serves as cofactor. Phosphorylation by AMPK at Ser-1179 in the presence of Ca(2+)-calmodulin (CaM) activates activity. In absence of Ca(2+)-calmodulin, AMPK also phosphorylates Thr-497, resulting in inhibition of activity. Phosphorylation of Ser-116 by CDK5 reduces activity.

It is found in the cell membrane. Its subcellular location is the membrane. The protein resides in the caveola. It localises to the cytoplasm. The protein localises to the cytoskeleton. It is found in the golgi apparatus. It catalyses the reaction 2 L-arginine + 3 NADPH + 4 O2 + H(+) = 2 L-citrulline + 2 nitric oxide + 3 NADP(+) + 4 H2O. Its activity is regulated as follows. Stimulated by calcium/calmodulin. Inhibited by NOSIP and NOSTRIN. Functionally, produces nitric oxide (NO) which is implicated in vascular smooth muscle relaxation through a cGMP-mediated signal transduction pathway. NO mediates vascular endothelial growth factor (VEGF)-induced angiogenesis in coronary vessels and promotes blood clotting through the activation of platelets. This Bos taurus (Bovine) protein is Nitric oxide synthase 3 (NOS3).